Here is a 588-residue protein sequence, read N- to C-terminus: Aspartate--tRNA ligase (588 aa).

E172 contacts L-aspartate. Residues 196 to 199 (QLFK) are aspartate. Residue R218 participates in L-aspartate binding. ATP is bound by residues 218–220 (RDE) and Q227. Position 449 (H449) interacts with L-aspartate. ATP is bound at residue E483. R490 serves as a coordination point for L-aspartate. 535–538 (GLDR) serves as a coordination point for ATP.

It belongs to the class-II aminoacyl-tRNA synthetase family. Type 1 subfamily. In terms of assembly, homodimer.

It is found in the cytoplasm. The catalysed reaction is tRNA(Asp) + L-aspartate + ATP = L-aspartyl-tRNA(Asp) + AMP + diphosphate. Functionally, catalyzes the attachment of L-aspartate to tRNA(Asp) in a two-step reaction: L-aspartate is first activated by ATP to form Asp-AMP and then transferred to the acceptor end of tRNA(Asp). This chain is Aspartate--tRNA ligase, found in Haemophilus influenzae (strain 86-028NP).